Here is a 32-residue protein sequence, read N- to C-terminus: Dermatoxin-J2 (32 aa).

Gln32 carries the glutamine amide modification.

Expressed by the skin glands.

It localises to the secreted. In terms of biological role, antimicrobial peptide. The sequence is that of Dermatoxin-J2 from Phasmahyla jandaia (Jandaia leaf frog).